Here is a 685-residue protein sequence, read N- to C-terminus: N(6)-adenosine-methyltransferase MT-A70-like (685 aa).

S-adenosyl-L-methionine is bound by residues 464–465 (DI) and Asp482. Residues 552 to 565 (RIIRTGRTGHWLNH) form a positively charged region required for RNA-binding region. S-adenosyl-L-methionine-binding positions include Lys599, 622–625 (RMHN), and 635–636 (NQ). The segment at 657–685 (EIDVQPPSPPRASAMETDNEPMAIDSITA) is disordered. Position 664 is a phosphoserine (Ser664).

The protein belongs to the MT-A70-like family. In terms of assembly, interacts with FIP37. Interacts with MTB. Associates with MTB, FIP37, VIR and HAKAI to form the m6A writer complex which is essential for adenosine methylation at specific mRNA sequences.

It localises to the nucleus. It catalyses the reaction an adenosine in mRNA + S-adenosyl-L-methionine = an N(6)-methyladenosine in mRNA + S-adenosyl-L-homocysteine + H(+). Its function is as follows. Catalytic subunit of the N6-methyltransferase complex, a multiprotein complex that mediates N6-methyladenosine (m6A) methylation at the 5'-[AG]GAC-3' consensus sites of some mRNAs. Associates with MTB, FIP37, VIR and HAKAI to form the m6A writer complex which is essential for adenosine methylation at specific mRNA sequences. N6-methyladenosine (m6A) plays a role in mRNA stability, processing, translation efficiency and editing. The sequence is that of N(6)-adenosine-methyltransferase MT-A70-like from Arabidopsis thaliana (Mouse-ear cress).